The chain runs to 351 residues: Tryptophan--tRNA ligase (351 aa).

ATP contacts are provided by residues 11–13 (RPT) and 19–20 (GH). The 'HIGH' region signature appears at 12-20 (PTGALHLGH). An L-tryptophan-binding site is contributed by aspartate 139. ATP contacts are provided by residues 151–153 (GRD), leucine 190, and 198–202 (KMSKS). A 'KMSKS' region motif is present at residues 198 to 202 (KMSKS).

This sequence belongs to the class-I aminoacyl-tRNA synthetase family. In terms of assembly, homodimer.

It is found in the cytoplasm. It catalyses the reaction tRNA(Trp) + L-tryptophan + ATP = L-tryptophyl-tRNA(Trp) + AMP + diphosphate + H(+). In terms of biological role, catalyzes the attachment of tryptophan to tRNA(Trp). The chain is Tryptophan--tRNA ligase from Borreliella burgdorferi (strain ATCC 35210 / DSM 4680 / CIP 102532 / B31) (Borrelia burgdorferi).